The primary structure comprises 507 residues: tRNA (guanine(6)-N(2))-methyltransferase THUMP3 (507 aa).

The THUMP domain maps to 165–285 (KIDQRNVKKE…DNEVIVGIAL (121 aa)).

It belongs to the methyltransferase superfamily. Part of the heterodimeric THUMPD3-TRM112 methyltransferase complex; this complex forms an active tRNA methyltransferase, where TRMT112 acts as an activator of the catalytic subunit THUMPD3.

Its subcellular location is the cytoplasm. It catalyses the reaction guanosine(6) in tRNA + S-adenosyl-L-methionine = N(2)-methylguanosine(6) in tRNA + S-adenosyl-L-homocysteine + H(+). The enzyme catalyses guanosine(7) in tRNA + S-adenosyl-L-methionine = N(2)-methylguanosine(7) in tRNA + S-adenosyl-L-homocysteine + H(+). In terms of biological role, catalytic subunit of the THUMPD3-TRM112 methyltransferase complex, that specifically mediates the S-adenosyl-L-methionine-dependent N(2)-methylation of guanosine nucleotide at position 6 (m2G6) in tRNAs. This is one of the major tRNA (guanine-N(2))-methyltransferases. Also catalyzes the S-adenosyl-L-methionine-dependent N(2)-methylation of guanosine nucleotide at position 7 of tRNA(Trp). In Homo sapiens (Human), this protein is tRNA (guanine(6)-N(2))-methyltransferase THUMP3.